The primary structure comprises 55 residues: Large ribosomal subunit protein bL33B (55 aa).

Belongs to the bacterial ribosomal protein bL33 family.

This Rhodococcus jostii (strain RHA1) protein is Large ribosomal subunit protein bL33B.